The sequence spans 183 residues: Triggering receptor expressed on myeloid cells 3 (183 aa).

The signal sequence occupies residues 1-19 (MSPLLLWLGLMLCVSGLQA). The Extracellular portion of the chain corresponds to 20–138 (GDEEEHKCFL…AWCQGKPVMV (119 aa)). The region spanning 30–128 (EGENLTLTCP…VIILRQRIRL (99 aa)) is the Ig-like V-type domain. N-linked (GlcNAc...) asparagine glycosylation occurs at N33. A disulfide bridge links C38 with C110. The helical transmembrane segment at 139–159 (IVLTCGFILNKGLVFSVLFVF) threads the bilayer. Residues 160 to 183 (LCKAGPKVLQPSKTSKVQGVSEKQ) lie on the Cytoplasmic side of the membrane.

In terms of assembly, interacts with TYROBP/DAP12. As to expression, expressed in macrophages and in T-cells.

It localises to the cell membrane. Its function is as follows. Forms a receptor signaling complex with TYROBP/DAP12 which mediates activation of macrophages as part of the innate immune response. The polypeptide is Triggering receptor expressed on myeloid cells 3 (Mus musculus (Mouse)).